The primary structure comprises 218 residues: Glutathione S-transferase Mu 7 (218 aa).

The 87-residue stretch at proline 2–glycine 88 folds into the GST N-terminal domain. Glutathione is bound by residues tyrosine 7–tryptophan 8, tryptophan 46–lysine 50, asparagine 59–leucine 60, and glutamine 72–serine 73. The region spanning threonine 90–leucine 208 is the GST C-terminal domain. A substrate-binding site is contributed by tyrosine 116.

It belongs to the GST superfamily. Mu family. In terms of assembly, homodimer.

It localises to the cytoplasm. It catalyses the reaction RX + glutathione = an S-substituted glutathione + a halide anion + H(+). In terms of biological role, conjugation of reduced glutathione to a wide number of exogenous and endogenous hydrophobic electrophiles. The sequence is that of Glutathione S-transferase Mu 7 from Rattus norvegicus (Rat).